A 387-amino-acid polypeptide reads, in one-letter code: Phosphoglycerate kinase (387 aa).

Substrate contacts are provided by residues 21-23 (DLN), Arg36, 59-62 (HLGR), Arg113, and Arg146. ATP-binding positions include Lys197, Glu314, and 340-343 (GGDT).

Belongs to the phosphoglycerate kinase family. In terms of assembly, monomer.

The protein localises to the cytoplasm. The catalysed reaction is (2R)-3-phosphoglycerate + ATP = (2R)-3-phospho-glyceroyl phosphate + ADP. The protein operates within carbohydrate degradation; glycolysis; pyruvate from D-glyceraldehyde 3-phosphate: step 2/5. In Pseudomonas fluorescens (strain SBW25), this protein is Phosphoglycerate kinase.